The sequence spans 76 residues: Acyl carrier protein (76 aa).

The Carrier domain occupies 1 to 76; the sequence is MATFDDVKDV…AAVDYIDNNQ (76 aa). The residue at position 36 (serine 36) is an O-(pantetheine 4'-phosphoryl)serine.

Belongs to the acyl carrier protein (ACP) family. Post-translationally, 4'-phosphopantetheine is transferred from CoA to a specific serine of apo-ACP by AcpS. This modification is essential for activity because fatty acids are bound in thioester linkage to the sulfhydryl of the prosthetic group.

The protein resides in the cytoplasm. It participates in lipid metabolism; fatty acid biosynthesis. Functionally, carrier of the growing fatty acid chain in fatty acid biosynthesis. The polypeptide is Acyl carrier protein (Deinococcus radiodurans (strain ATCC 13939 / DSM 20539 / JCM 16871 / CCUG 27074 / LMG 4051 / NBRC 15346 / NCIMB 9279 / VKM B-1422 / R1)).